Here is a 229-residue protein sequence, read N- to C-terminus: MKIGIVGAMAQEVEILKNLMADRTETRVASAVIFEGKINGKDVALLQSGIGKVAAAIGTTALLQLAKPDCVINTGSAGGVAKGLKVGDIVISDETRYHDADVTAFGYEKGQLPANPAAFLSDKKLADLAQEIAEKQGQSVKRGLICSGDSFINSEDKITQIQADFPNVMGVEMEATAIAQVCYAFNVPFVVVRAISDGGDGKASMSFEEFLPLAAKQSSTLVLGMIDRL.

Catalysis depends on glutamate 12, which acts as the Proton acceptor. Substrate contacts are provided by residues glycine 78, isoleucine 152, and 173–174; that span reads ME. The Proton donor role is filled by aspartate 197.

It belongs to the PNP/UDP phosphorylase family. MtnN subfamily.

The catalysed reaction is S-adenosyl-L-homocysteine + H2O = S-(5-deoxy-D-ribos-5-yl)-L-homocysteine + adenine. It catalyses the reaction S-methyl-5'-thioadenosine + H2O = 5-(methylsulfanyl)-D-ribose + adenine. It carries out the reaction 5'-deoxyadenosine + H2O = 5-deoxy-D-ribose + adenine. It participates in amino-acid biosynthesis; L-methionine biosynthesis via salvage pathway; S-methyl-5-thio-alpha-D-ribose 1-phosphate from S-methyl-5'-thioadenosine (hydrolase route): step 1/2. Its function is as follows. Catalyzes the irreversible cleavage of the glycosidic bond in both 5'-methylthioadenosine (MTA) and S-adenosylhomocysteine (SAH/AdoHcy) to adenine and the corresponding thioribose, 5'-methylthioribose and S-ribosylhomocysteine, respectively. Also cleaves 5'-deoxyadenosine, a toxic by-product of radical S-adenosylmethionine (SAM) enzymes, into 5-deoxyribose and adenine. This Haemophilus influenzae (strain PittGG) protein is 5'-methylthioadenosine/S-adenosylhomocysteine nucleosidase.